A 244-amino-acid polypeptide reads, in one-letter code: Phosphoadenosine 5'-phosphosulfate reductase (244 aa).

Residue Cys-239 is the Nucleophile; cysteine thiosulfonate intermediate of the active site.

It belongs to the PAPS reductase family. CysH subfamily.

It is found in the cytoplasm. It catalyses the reaction [thioredoxin]-disulfide + sulfite + adenosine 3',5'-bisphosphate + 2 H(+) = [thioredoxin]-dithiol + 3'-phosphoadenylyl sulfate. Its pathway is sulfur metabolism; hydrogen sulfide biosynthesis; sulfite from sulfate: step 3/3. Its function is as follows. Catalyzes the formation of sulfite from phosphoadenosine 5'-phosphosulfate (PAPS) using thioredoxin as an electron donor. The chain is Phosphoadenosine 5'-phosphosulfate reductase from Salmonella schwarzengrund (strain CVM19633).